We begin with the raw amino-acid sequence, 718 residues long: Sodium/myo-inositol cotransporter (718 aa).

Topologically, residues 1 to 9 (MRAVLETAD) are extracellular. A helical membrane pass occupies residues 10–29 (IAIVALYFILVMCIGFFAMW). Residues 30 to 38 (KSNRSTVSG) are Cytoplasmic-facing. Residues 39–57 (YFLAGRSMTWVAIGASLFV) traverse the membrane as a helical segment. Residues 58–86 (SNIGSEHFIGLAGSGAASGFAVGAWEFNA) are Extracellular-facing. The chain crosses the membrane as a helical span at residues 87-110 (LLLLQLLGWVFIPIYIRSGVYTMP). At 111 to 123 (EYLSKRFGGHRIQ) the chain is on the cytoplasmic side. Residues 124 to 144 (VYFAALSLILYIFTKLSVDLY) traverse the membrane as a helical segment. The Extracellular segment spans residues 145–157 (SGALFIQESLGWN). The chain crosses the membrane as a helical span at residues 158 to 183 (LYVSVILLIGMTALLTVTGGLVAVIY). Over 184–186 (TDT) the chain is Cytoplasmic. A helical membrane pass occupies residues 187–205 (LQALLMIVGALTLMIISMM). The Extracellular portion of the chain corresponds to 206–303 (EIGGFEEVKR…HAKGSTLMAG (98 aa)). Asparagine 232 carries N-linked (GlcNAc...) asparagine glycosylation. The helical transmembrane segment at 304 to 324 (FLKLLPMFIIVVPGMISRILF) threads the bilayer. Topologically, residues 325 to 353 (ADDIACINPEHCMQVCGSRAGCSNIAYPR) are cytoplasmic. The chain crosses the membrane as a helical span at residues 354–376 (LVMKLVPVGLRGLMMAVMIAALM). The Extracellular segment spans residues 377–406 (SDLDSIFNSASTIFTLDVYKLIRRSASSRE). The helical transmembrane segment at 407–430 (LMIVGRIFVAFMVVISIAWVPIIV) threads the bilayer. The Cytoplasmic segment spans residues 431 to 443 (EMQGGQMYLYIQE). A helical membrane pass occupies residues 444–462 (VADYLTPPVAALFLLAIFW). The Extracellular portion of the chain corresponds to 463 to 510 (KRCNEQGAFYGGMAGFVLGAVRLTLAFAYRAPECDQPDNRPGFIKDIH). The chain crosses the membrane as a helical span at residues 511 to 532 (YMYVATALFWVTGLITVIVSLL). At 533 to 695 (TPPPTKEQIR…QMLEEPPQVK (163 aa)) the chain is on the cytoplasmic side. Serine 594 and serine 632 each carry phosphoserine. A helical transmembrane segment spans residues 696 to 716 (LILNIGLFAVCSLGIFMFVYF). Residues 717–718 (SL) lie on the Extracellular side of the membrane.

It belongs to the sodium:solute symporter (SSF) (TC 2.A.21) family. In terms of assembly, interacts with KCNQ2 (via the pore module). Interacts with KCNQ1; this interaction is direct. Forms coregulatory complexes with ion channels KCNQ2-KCNQ3 and KCNQ1-KCNE2. As to expression, kidney cortex and medulla.

Its subcellular location is the apical cell membrane. The protein localises to the basolateral cell membrane. It carries out the reaction myo-inositol(out) + 2 Na(+)(out) = myo-inositol(in) + 2 Na(+)(in). The catalysed reaction is scyllo-inositol(out) + 2 Na(+)(out) = scyllo-inositol(in) + 2 Na(+)(in). Inhibited by phlorizin and phloretin. Functionally, electrogenic Na(+)-coupled sugar symporter that actively transports myo-inositol and its stereoisomer scyllo-inositol across the plasma membrane, with a Na(+) to sugar coupling ratio of 2:1. Maintains myo-inositol concentration gradient that defines cell volume and fluid balance during osmotic stress, in particular in the fetoplacental unit and central nervous system. Forms coregulatory complexes with voltage-gated K(+) ion channels, allosterically altering ion selectivity, voltage dependence and gating kinetics of the channel. In turn, K(+) efflux through the channel forms a local electrical gradient that modulates electrogenic Na(+)-coupled myo-inositol influx through the transporter. Associates with KCNQ1-KCNE2 channel in the apical membrane of choroid plexus epithelium and regulates the myo-inositol gradient between blood and cerebrospinal fluid with an impact on neuron excitability. Associates with KCNQ2-KCNQ3 channel altering ion selectivity, increasing Na(+) and Cs(+) permeation relative to K(+) permeation. Provides myo-inositol precursor for biosynthesis of phosphoinositides such as PI(4,5)P2, thus indirectly affecting the activity of phosphoinositide-dependent ion channels and Ca(2+) signaling upon osmotic stress. Has very low affinity for sugars such as L-fucose and L-xylose, with an affinity about three orders of magnitude lower than myo-inositol. The protein is Sodium/myo-inositol cotransporter (SLC5A3) of Canis lupus familiaris (Dog).